The chain runs to 512 residues: SNF1-related protein kinase catalytic subunit alpha KIN10 (512 aa).

Residues Tyr19–Phe271 form the Protein kinase domain. Lys20 is covalently cross-linked (Glycyl lysine isopeptide (Lys-Gly) (interchain with G-Cter in ubiquitin)). Leu25–Val33 provides a ligand contact to ATP. Lys34 is covalently cross-linked (Glycyl lysine isopeptide (Lys-Gly) (interchain with G-Cter in SUMO)). Lys48 is a binding site for ATP. A Glycyl lysine isopeptide (Lys-Gly) (interchain with G-Cter in SUMO) cross-link involves residue Lys63. Asp142 acts as the Proton acceptor in catalysis. Ser164 is modified (phosphoserine). The residue at position 175 (Thr175) is a Phosphothreonine; by GRIK1 or GRIK2. The auto-inhibitory domain (AID) stretch occupies residues Ala290–Arg389. Positions Lys292–Asp332 constitute a UBA domain. The tract at residues Asp294–Leu512 is regulatory domain (RD). The residue at position 364 (Ser364) is a Phosphoserine. Residue Lys390 forms a Glycyl lysine isopeptide (Lys-Gly) (interchain with G-Cter in SUMO) linkage. Residues Lys390–Leu512 are PPI. In terms of domain architecture, KA1 spans Ala463–Val511.

Belongs to the protein kinase superfamily. CAMK Ser/Thr protein kinase family. SNF1 subfamily. In terms of assembly, subunit of a probable heterotrimeric complex consisting of an alpha catalytic (KIN10 or KIN11) subunit, and a beta (KINB) and a gamma (KING or SNF4) non-catalytic regulatory subunits. Interacts with KINB2, KINB3, SNF4 and probably with KINB1 and KING1. Interacts with SKP1/ASK1, PAD1, the N-terminus of PRL1 and the WD40 domain of 5PTase13. Potential subunit of a SCF ubiquitin ligase complex consisting of a SNF1-related protein kinase, SKP1 and CUL1. The association of the SCF complex with the proteasome may be mediated by PAD1 and seems to be inhibited by the interaction with PRL1. Interacts with ATAF1. Interacts with ESD4. Interacts with SCE1. Interacts with FUS3. Interacts with PP2C74. Interacts with CDKE1. Interacts with ABI1 and PP2CA. Interacts with KRP6. Interacts with CIPK14. Interacts with FLZ proteins through their FLZ-type zinc finger domains. Interacts with GEBP/STKR1. Interacts with MYC2. Interacts with IDD8. Interacts with BZIP63. Interacts with PTL. Interacts with FLZ3, FLZ9, TCP3, TCP13, HB21/ZHD3 and HB23/ZHD10. Interacts with PTP1. Interacts with RAPTOR1B. Forms oligomers in vitro under strongly reducing conditions. Interacts with WRI1. Interacts with EIN3. Component of a ternary complex composed of BZIP2-BZIP63 heterodimer and KIN10. Interacts with IPK2b. Interacts with FLZ6 and FLZ10. In terms of processing, phosphorylated at Thr-175 in response to glucose. Phosphorylated at Thr-175 under submergence. Autophosphorylated. Dephosphorylated at Thr-175 by ABI1 and PP2CA. Ubiquitinated. Degradation is mediated by a CUL4-based E3 ligase that uses PRL1 as a substrate receptor. Post-translationally, sumoylated by SIZ1. Sumoylated SnRK1 is ubiquitinated and degraded by the proteasome. Isoform 2 is widely expressed, especially in newly developing tissues. Isoform 2 is expressed throughout the seedling, with highest expression in leaf primordia and vascular tissue, and the seedling root tip. Isoform 2 is later expressed in developing lateral root primordia and developing embryos within siliques. Isoform 1 is widely expressed but at very low levels.

It localises to the plastid. Its subcellular location is the chloroplast. The protein resides in the cytoplasm. It is found in the nucleus. The protein localises to the golgi apparatus. It localises to the endoplasmic reticulum. The catalysed reaction is L-seryl-[protein] + ATP = O-phospho-L-seryl-[protein] + ADP + H(+). It catalyses the reaction L-threonyl-[protein] + ATP = O-phospho-L-threonyl-[protein] + ADP + H(+). With respect to regulation, activated by phosphorylation at Thr-175 by GRIK1/SNAK2 and GRIK2/SNAK1. Inactivated by dephosphorylation at Thr-175. Inhibited by trehalose-6-phosphate. Down-regulated by SR45 by affecting its stability. Reduced kinase activity in response to H(2)O(2) treatment. The redox-state of Cys-177 seems to directly influence its kinase activity. Down-regulated by FLZ6 and FLZ10. In terms of biological role, catalytic subunit of the probable trimeric SNF1-related protein kinase (SnRK) complex, a central regulator of cellular energy homeostasis, which, in response to seemingly unrelated darkness, sugar and stress conditions, activates energy-producing pathways and inhibits energy-consuming processes. May play a role in a signal transduction cascade regulating gene expression and carbohydrate metabolism in higher plants. The SnRK complex may also be involved in the regulation of fatty acid synthesis by phosphorylation of acetyl-CoA carboxylase and in assimilation of nitrogen by phosphorylating nitrate reductase. In vitro, KIN10 exhibits kinase activity on sucrose phosphate synthase and the kinase activity is inhibited by PRL1. May be a subunit of a SCF ubiquitin ligase complex and thus be involved in proteasomal ubiquitination. Phosphorylates GRIK1/SNAK2 and GRIK2/SNAK1 in vitro. Cooperates with FUS3 to regulate developmental phase transitions and lateral organ development and act both as positive regulators of abscisic acid (ABA) signaling during germination. Phosphorylates FUS3 in embryo. Negatively modulates MYC2 accumulation through its protein phosphorylation. Phosphorylates geminivirus (CaLCuV, TGMV, ToMoV) AL2 protein resulting in a delay in the viral DNA accumulation and symptom appearance during infection. Regulates bZIP63 activity to alter metabolism in response to starvation through its protein phosphorylation. Under sugar deprivation conditions, antagonizes the IDD8 function in flowering time control by its protein phosphorylation. Plays a cardinal role in the control of cell proliferation through inhibition of KRP6 activity by its protein phosphorylation. Under submergence, phosphorylates PTP1, leading to the release of the MPK6 signaling pathway inhibition. Triggers its own SUMO-mediated proteasomal degradation, establishing a negative feedback loop that attenuates SnRK1 signaling and prevents detrimental hyperactivation of stress responses. Phosphorylates RAPTOR1B in vitro. Phosphorylates and down-regulates HMGR1S in vitro. Kinase activity is redox-sensitive. Acts upstream of TOR in the regulation of autophagy. Required for the activation of autophagy by many abiotic stresses. Involved in positive regulation of autophagy, possibly by affecting the phosphorylation of ATG1 proteins. Negatively modulates WRI1 accumulation through its protein phosphorylation. Modulates leaf senescence progression by the negative regulation of EIN3 accumulation through its protein phosphorylation. Under extended darkness, C/S1-bZIP-SnRK1 complex interacts with the histone acetylation machinery to remodel chromatin and facilitate transcription. BZIP2-BZIP63-KIN10 complex binds to the ETFQO promoter to up-regulate its transcription. Phosphorylates and down-regulates IPK2b in vitro. Involved in the regulation of sucrose-induced hypocotyl elongation under light/dark cycles. In Arabidopsis thaliana (Mouse-ear cress), this protein is SNF1-related protein kinase catalytic subunit alpha KIN10.